A 192-amino-acid chain; its full sequence is Fe/S biogenesis protein NfuA (192 aa).

2 residues coordinate [4Fe-4S] cluster: C149 and C152.

The protein belongs to the NfuA family. Homodimer. The cofactor is [4Fe-4S] cluster.

Its function is as follows. Involved in iron-sulfur cluster biogenesis. Binds a 4Fe-4S cluster, can transfer this cluster to apoproteins, and thereby intervenes in the maturation of Fe/S proteins. Could also act as a scaffold/chaperone for damaged Fe/S proteins. The sequence is that of Fe/S biogenesis protein NfuA from Shewanella amazonensis (strain ATCC BAA-1098 / SB2B).